The chain runs to 317 residues: Lipoyl synthase (317 aa).

[4Fe-4S] cluster-binding residues include Cys55, Cys60, Cys66, Cys81, Cys85, Cys88, and Ser292. The Radical SAM core domain occupies 67–281 (WEDREATFLI…ERYATEIGFA (215 aa)).

This sequence belongs to the radical SAM superfamily. Lipoyl synthase family. Requires [4Fe-4S] cluster as cofactor.

The protein localises to the cytoplasm. The enzyme catalyses [[Fe-S] cluster scaffold protein carrying a second [4Fe-4S](2+) cluster] + N(6)-octanoyl-L-lysyl-[protein] + 2 oxidized [2Fe-2S]-[ferredoxin] + 2 S-adenosyl-L-methionine + 4 H(+) = [[Fe-S] cluster scaffold protein] + N(6)-[(R)-dihydrolipoyl]-L-lysyl-[protein] + 4 Fe(3+) + 2 hydrogen sulfide + 2 5'-deoxyadenosine + 2 L-methionine + 2 reduced [2Fe-2S]-[ferredoxin]. Its pathway is protein modification; protein lipoylation via endogenous pathway; protein N(6)-(lipoyl)lysine from octanoyl-[acyl-carrier-protein]: step 2/2. In terms of biological role, catalyzes the radical-mediated insertion of two sulfur atoms into the C-6 and C-8 positions of the octanoyl moiety bound to the lipoyl domains of lipoate-dependent enzymes, thereby converting the octanoylated domains into lipoylated derivatives. The sequence is that of Lipoyl synthase from Mycolicibacterium gilvum (strain PYR-GCK) (Mycobacterium gilvum (strain PYR-GCK)).